The following is an 87-amino-acid chain: Small ribosomal subunit protein bS20 (87 aa).

The segment at 1–21 (MANHKSAEKRARQTIKKTERN) is disordered.

This sequence belongs to the bacterial ribosomal protein bS20 family.

Its function is as follows. Binds directly to 16S ribosomal RNA. This chain is Small ribosomal subunit protein bS20, found in Campylobacter jejuni subsp. jejuni serotype O:23/36 (strain 81-176).